The primary structure comprises 350 residues: 3-isopropylmalate dehydrogenase (350 aa).

Residue 76 to 87 (GPKWDNAPKRPE) coordinates NAD(+). The substrate site is built by Arg94, Arg104, Arg132, and Asp217. Mg(2+)-binding residues include Asp217, Asp241, and Asp245. 275-287 (GSAPDIANQNIAN) provides a ligand contact to NAD(+).

It belongs to the isocitrate and isopropylmalate dehydrogenases family. LeuB type 1 subfamily. Homodimer. Mg(2+) serves as cofactor. Mn(2+) is required as a cofactor.

It localises to the cytoplasm. The catalysed reaction is (2R,3S)-3-isopropylmalate + NAD(+) = 4-methyl-2-oxopentanoate + CO2 + NADH. It participates in amino-acid biosynthesis; L-leucine biosynthesis; L-leucine from 3-methyl-2-oxobutanoate: step 3/4. In terms of biological role, catalyzes the oxidation of 3-carboxy-2-hydroxy-4-methylpentanoate (3-isopropylmalate) to 3-carboxy-4-methyl-2-oxopentanoate. The product decarboxylates to 4-methyl-2 oxopentanoate. This Listeria monocytogenes serotype 4b (strain F2365) protein is 3-isopropylmalate dehydrogenase.